The following is a 344-amino-acid chain: Dimethyladenosine transferase 1, mitochondrial (344 aa).

Residues 1 to 27 (MATPGALAKFRLPPLPTIGEIVKLFNL) constitute a mitochondrion transit peptide. N36, L38, G63, E85, K86, D111, I112, and N141 together coordinate S-adenosyl-L-methionine.

Belongs to the class I-like SAM-binding methyltransferase superfamily. rRNA adenine N(6)-methyltransferase family. KsgA subfamily.

The protein localises to the mitochondrion. The enzyme catalyses adenosine(N)/adenosine(N+1) in rRNA + 4 S-adenosyl-L-methionine = N(6)-dimethyladenosine(N)/N(6)-dimethyladenosine(N+1) in rRNA + 4 S-adenosyl-L-homocysteine + 4 H(+). In terms of biological role, mitochondrial methyltransferase which uses S-adenosyl methionine to dimethylate two highly conserved adjacent adenosine residues (A1583 and A1584) within the loop of helix 45 at the 3-prime end of 12S rRNA, thereby regulating the assembly or stability of the small subunit of the mitochondrial ribosome. Also required for basal transcription of mitochondrial DNA, probably via its interaction with POLRMT and TFAM. Stimulates transcription independently of the methyltransferase activity. The protein is Dimethyladenosine transferase 1, mitochondrial (tfb1m.L) of Xenopus laevis (African clawed frog).